We begin with the raw amino-acid sequence, 172 residues long: Shikimate kinase (172 aa).

Position 11 to 16 (11 to 16 (GAGKST)) interacts with ATP. Serine 15 is a binding site for Mg(2+). Residues aspartate 33, arginine 57, and glycine 79 each coordinate substrate. Arginine 117 contacts ATP. Arginine 136 serves as a coordination point for substrate. Arginine 153 contributes to the ATP binding site.

Belongs to the shikimate kinase family. As to quaternary structure, monomer. Requires Mg(2+) as cofactor.

The protein resides in the cytoplasm. It catalyses the reaction shikimate + ATP = 3-phosphoshikimate + ADP + H(+). Its pathway is metabolic intermediate biosynthesis; chorismate biosynthesis; chorismate from D-erythrose 4-phosphate and phosphoenolpyruvate: step 5/7. Functionally, catalyzes the specific phosphorylation of the 3-hydroxyl group of shikimic acid using ATP as a cosubstrate. The sequence is that of Shikimate kinase from Pseudomonas aeruginosa (strain LESB58).